The following is a 558-amino-acid chain: Putative cation/proton antiporter YbaL (558 aa).

Residues Met1–His3 are Periplasmic-facing. Residues Ala4–Leu24 traverse the membrane as a helical segment. The Cytoplasmic segment spans residues Ala25–Ser31. The chain crosses the membrane as a helical span at residues Pro32–Ala52. Over Asp53 to Lys55 the chain is Periplasmic. A helical transmembrane segment spans residues Leu56–Phe76. Residues Ser77–Lys85 lie on the Cytoplasmic side of the membrane. Residues Ala86 to Leu106 form a helical membrane-spanning segment. Residues Ser107–Trp112 lie on the Periplasmic side of the membrane. Residues Ser113–Leu133 form a helical membrane-spanning segment. Residues Arg134–Gln148 lie on the Cytoplasmic side of the membrane. A helical membrane pass occupies residues Ile149 to Pro169. At Ala170–Leu185 the chain is on the periplasmic side. The chain crosses the membrane as a helical span at residues Ala186–Val206. Residues Gly207 to Glu225 lie on the Cytoplasmic side of the membrane. The chain crosses the membrane as a helical span at residues Leu226 to Phe246. Residue Asp247 is a topological domain, periplasmic. A helical transmembrane segment spans residues Val248–His268. Residues Arg269–Asp279 lie on the Cytoplasmic side of the membrane. A helical membrane pass occupies residues Ala280 to Gln300. Over Gln301–Leu303 the chain is Periplasmic. A helical membrane pass occupies residues Ala304 to Val324. At Arg325 to Thr336 the chain is on the cytoplasmic side. The chain crosses the membrane as a helical span at residues Ile337–Ala357. The Periplasmic segment spans residues Leu358–Asn367. A helical membrane pass occupies residues Leu368–Glu388. Residues Lys389–Gly558 lie on the Cytoplasmic side of the membrane. The 118-residue stretch at Cys417–Met534 folds into the RCK N-terminal domain. AMP is bound by residues Arg427–Val428, Glu447–Thr448, Asn467–Ala468, Glu494, and Arg514.

It belongs to the monovalent cation:proton antiporter 2 (CPA2) transporter (TC 2.A.37) family.

The protein resides in the cell inner membrane. In Escherichia coli (strain K12), this protein is Putative cation/proton antiporter YbaL (ybaL).